The sequence spans 1089 residues: Carbamoyl phosphate synthase large chain (1089 aa).

The segment at 1 to 399 is carboxyphosphate synthetic domain; it reads MPKRTDIKSI…SIQKALCSLE (399 aa). ATP is bound by residues R127, R167, G173, G174, E206, L208, E213, G239, V240, H241, Q283, and E297. The 196-residue stretch at 131–326 folds into the ATP-grasp 1 domain; that stretch reads KECMKKIGMD…IAKVATLLAV (196 aa). Residues Q283, E297, and N299 each contribute to the Mg(2+) site. Positions 283, 297, and 299 each coordinate Mn(2+). Residues 400–553 are oligomerization domain; the sequence is RSLSGFDRVK…NVSELTQSKN (154 aa). A carbamoyl phosphate synthetic domain region spans residues 554–951; the sequence is DAKDKKEKKV…SYAKSQIASF (398 aa). Residues 680 to 871 enclose the ATP-grasp 2 domain; it reads AEFITKLGIN…LAKVATRVMW (192 aa). R716, Q755, L757, E762, G787, I788, H789, S790, Q830, and E842 together coordinate ATP. Mg(2+) is bound by residues Q830, E842, and N844. Mn(2+)-binding residues include Q830, E842, and N844. Positions 952 to 1089 constitute an MGS-like domain; sequence NHLPEQGVVF…VKSLQEWLKS (138 aa). The allosteric domain stretch occupies residues 952–1089; that stretch reads NHLPEQGVVF…VKSLQEWLKS (138 aa).

This sequence belongs to the CarB family. In terms of assembly, composed of two chains; the small (or glutamine) chain promotes the hydrolysis of glutamine to ammonia, which is used by the large (or ammonia) chain to synthesize carbamoyl phosphate. Tetramer of heterodimers (alpha,beta)4. Mg(2+) is required as a cofactor. Mn(2+) serves as cofactor.

It carries out the reaction hydrogencarbonate + L-glutamine + 2 ATP + H2O = carbamoyl phosphate + L-glutamate + 2 ADP + phosphate + 2 H(+). The catalysed reaction is hydrogencarbonate + NH4(+) + 2 ATP = carbamoyl phosphate + 2 ADP + phosphate + 2 H(+). It participates in amino-acid biosynthesis; L-arginine biosynthesis; carbamoyl phosphate from bicarbonate: step 1/1. It functions in the pathway pyrimidine metabolism; UMP biosynthesis via de novo pathway; (S)-dihydroorotate from bicarbonate: step 1/3. Functionally, large subunit of the glutamine-dependent carbamoyl phosphate synthetase (CPSase). CPSase catalyzes the formation of carbamoyl phosphate from the ammonia moiety of glutamine, carbonate, and phosphate donated by ATP, constituting the first step of 2 biosynthetic pathways, one leading to arginine and/or urea and the other to pyrimidine nucleotides. The large subunit (synthetase) binds the substrates ammonia (free or transferred from glutamine from the small subunit), hydrogencarbonate and ATP and carries out an ATP-coupled ligase reaction, activating hydrogencarbonate by forming carboxy phosphate which reacts with ammonia to form carbamoyl phosphate. The sequence is that of Carbamoyl phosphate synthase large chain from Campylobacter jejuni subsp. jejuni serotype O:2 (strain ATCC 700819 / NCTC 11168).